The following is a 224-amino-acid chain: Transmembrane emp24 domain-containing protein 7 (224 aa).

The signal sequence occupies residues 1 to 34 (MPRPGSAQRWAAVAGRWGCRLLALLLLVPGPGGA). Topologically, residues 35 to 187 (SEITFELPDN…RAEDLNTRVA (153 aa)) are lumenal. Residues 46 to 128 (KQCFYEDIAQ…HKTVYFDFQV (83 aa)) form the GOLD domain. N-linked (GlcNAc...) asparagine glycosylation is present at N103. The chain crosses the membrane as a helical span at residues 188–208 (YWSVGEALILLVVSIGQVFLL). Residues 209 to 224 (KSFFSDKRTTTTRVGS) lie on the Cytoplasmic side of the membrane. The COPII vesicle coat-binding signature appears at 211–212 (FF). The COPI vesicle coat-binding motif lies at 211-224 (FFSDKRTTTTRVGS).

The protein belongs to the EMP24/GP25L family. As to quaternary structure, predominantly monomeric and to lesser extent homodimeric in endoplasmic reticulum, endoplasmic reticulum-Golgi intermediate compartment and cis-Golgi network. Oligomerizes with other members of the EMP24/GP25L family such as TMED2, TMED9 and TMED10. Interacts (via C-terminus) with COPG1; the interaction involves dimeric TMED7. N-linked glycosylated in complex form containing terminal sialic acid.

The protein resides in the endoplasmic reticulum membrane. Its subcellular location is the golgi apparatus. The protein localises to the cis-Golgi network membrane. It localises to the endoplasmic reticulum-Golgi intermediate compartment membrane. It is found in the cytoplasmic vesicle. The protein resides in the COPI-coated vesicle membrane. Its subcellular location is the COPII-coated vesicle membrane. In terms of biological role, potential role in vesicular protein trafficking, mainly in the early secretory pathway. Appears to play a role in the biosynthesis of secreted cargo including processing and post-translational modifications. The sequence is that of Transmembrane emp24 domain-containing protein 7 (TMED7) from Homo sapiens (Human).